The following is a 956-amino-acid chain: Valine--tRNA ligase (956 aa).

A 'HIGH' region motif is present at residues 43–53 (PNITGNLHIGH). A 'KMSKS' region motif is present at residues 556–560 (KMSKS). Position 559 (lysine 559) interacts with ATP. Residues 889–920 (PKEKELKNLNKEISKIQLAINKLQQRLSNEEF) are a coiled coil.

Belongs to the class-I aminoacyl-tRNA synthetase family. ValS type 1 subfamily. As to quaternary structure, monomer.

It localises to the cytoplasm. It catalyses the reaction tRNA(Val) + L-valine + ATP = L-valyl-tRNA(Val) + AMP + diphosphate. Its function is as follows. Catalyzes the attachment of valine to tRNA(Val). As ValRS can inadvertently accommodate and process structurally similar amino acids such as threonine, to avoid such errors, it has a 'posttransfer' editing activity that hydrolyzes mischarged Thr-tRNA(Val) in a tRNA-dependent manner. The sequence is that of Valine--tRNA ligase from Buchnera aphidicola subsp. Baizongia pistaciae (strain Bp).